A 483-amino-acid chain; its full sequence is MVATTETTNIGKITQIIGPVVDAEFPSGKMPRIYNALRVEGKNAAGQDVAVTCEVQQLLGDNQVRAVSMSSTDGLVRGMEITDTGAPINVPVGKATLGRIFNILGEPVDNQGPVYTAETSPIHRAAPKFTDLDTKPTVFETGIKVIDLLTPYRRGGKIGLFGGAGVGKTVIMMELINNIAINHGGVSVFGGVGERTREGNDLYNEMIESKVINADNLNESKIALVYGQMNEPPGARMRVGLSALTMAEYFRDVNKQDVLLFIDNIFRFVQAGSEVSALLGRMPSAVGYQPTLGTDVGDLQERITSTKEGSITSIQAVYVPADDLTDPAPATTFAHLDGTTVLSRGLASKGIYPAVDPLDSTSTMLQAGIVGEDHYNTARAVQSTLQRYKELQDIIAILGLDELSEEDRLIVDRARKVERFLSQPFFVAEVFTGAPGKYVSLEDTIKGFKMILSGELDDLPEQAFYLVGDIQEAKAKAEKLKQD.

162 to 169 (GGAGVGKT) lines the ATP pocket.

This sequence belongs to the ATPase alpha/beta chains family. F-type ATPases have 2 components, CF(1) - the catalytic core - and CF(0) - the membrane proton channel. CF(1) has five subunits: alpha(3), beta(3), gamma(1), delta(1), epsilon(1). CF(0) has four main subunits: a(1), b(1), b'(1) and c(9-12).

The protein localises to the cellular thylakoid membrane. The enzyme catalyses ATP + H2O + 4 H(+)(in) = ADP + phosphate + 5 H(+)(out). Functionally, produces ATP from ADP in the presence of a proton gradient across the membrane. The catalytic sites are hosted primarily by the beta subunits. This chain is ATP synthase subunit beta, found in Prochloron didemni.